A 327-amino-acid chain; its full sequence is Ferrochelatase (327 aa).

The Fe cation site is built by His-187 and Glu-265.

Belongs to the ferrochelatase family.

The protein resides in the cytoplasm. It catalyses the reaction heme b + 2 H(+) = protoporphyrin IX + Fe(2+). Its pathway is porphyrin-containing compound metabolism; protoheme biosynthesis; protoheme from protoporphyrin-IX: step 1/1. Its function is as follows. Catalyzes the ferrous insertion into protoporphyrin IX. The chain is Ferrochelatase from Chlamydia pneumoniae (Chlamydophila pneumoniae).